Here is a 230-residue protein sequence, read N- to C-terminus: Putative transcription factor bHLH107 (230 aa).

The bHLH domain maps to 44 to 93; the sequence is ASLRNHKEAERKRRARINSHLNKLRKLLSCNSKTDKSTLLAKVVQRVKEL.

Homodimer.

Its subcellular location is the nucleus. This Arabidopsis thaliana (Mouse-ear cress) protein is Putative transcription factor bHLH107 (BHLH107).